Here is a 252-residue protein sequence, read N- to C-terminus: Probable phosphatase SO_1652 (252 aa).

Zn(2+)-binding residues include His-8, His-10, His-16, His-41, Glu-74, His-102, His-132, Asp-193, and His-195.

This sequence belongs to the PHP family. Zn(2+) is required as a cofactor.

This is Probable phosphatase SO_1652 from Shewanella oneidensis (strain ATCC 700550 / JCM 31522 / CIP 106686 / LMG 19005 / NCIMB 14063 / MR-1).